Here is a 392-residue protein sequence, read N- to C-terminus: O-phospho-L-seryl-tRNA:Cys-tRNA synthase 1 (392 aa).

Residues 85 to 86, Asn-190, and 213 to 215 each bind pyridoxal 5'-phosphate; these read AR and SGH. Lys-216 carries the N6-(pyridoxal phosphate)lysine modification.

This sequence belongs to the SepCysS family. In terms of assembly, homodimer. Interacts with SepRS. It depends on pyridoxal 5'-phosphate as a cofactor.

It catalyses the reaction O-phospho-L-seryl-tRNA(Cys) + hydrogen sulfide + H(+) = L-cysteinyl-tRNA(Cys) + phosphate. In terms of biological role, converts O-phospho-L-seryl-tRNA(Cys) (Sep-tRNA(Cys)) to L-cysteinyl-tRNA(Cys) (Cys-tRNA(Cys)). This Methanoregula boonei (strain DSM 21154 / JCM 14090 / 6A8) protein is O-phospho-L-seryl-tRNA:Cys-tRNA synthase 1.